A 979-amino-acid chain; its full sequence is Protein SMAX1-LIKE 6 (979 aa).

One can recognise a Clp R domain in the interval Ala-8 to Ser-190. Repeat regions lie at residues Leu-12–Leu-86 and Val-100–Ser-190. The EAR signature appears at Leu-833 to Leu-837.

It belongs to the ClpA/ClpB family. In terms of assembly, interacts with TPL/TPR in an EAR-motif dependent manner. Interacts with TPR3. Interacts with MAX2 and TPR2. Interacts with D14. The interaction with D14 occurs in the presence of (2'R) stereoisomers of strigolactones, but not (2'S) stereoisomers. In terms of processing, ubiquitinated upon strigolactone treatment. Probable proteolytic target of SCF(MAX2)-mediated stigolactone signaling. Detected in roots, seedlings and axillary branches. Expressed in the primary rosette buds and expanding leaves of adult rosettes, the vasculature of the hypocotyls, cotyledons, and mature roots, and in the midvein and petioles of young leaves.

Its subcellular location is the nucleus. Probable component of a transcriptional corepressor complex involved in branching control. Regulates cotyledon expansion and lateral root growth, but not germination or hypocotyl elongation. Promotes auxin transport and PIN1 accumulation in the stem and represses BRC1/TCP18 expression in axillary buds. The sequence is that of Protein SMAX1-LIKE 6 from Arabidopsis thaliana (Mouse-ear cress).